The chain runs to 217 residues: Uridylate kinase (217 aa).

Residue 5–9 (KLTGR) coordinates ATP. Position 37 (Gly37) interacts with UMP. ATP-binding residues include Gly38 and Arg42. UMP-binding positions include Asp59 and 107 to 113 (FQPGQST). Residues Asn134, Tyr139, and Asp142 each contribute to the ATP site.

Belongs to the UMP kinase family. Homohexamer.

The protein resides in the cytoplasm. The enzyme catalyses UMP + ATP = UDP + ADP. Its pathway is pyrimidine metabolism; CTP biosynthesis via de novo pathway; UDP from UMP (UMPK route): step 1/1. With respect to regulation, inhibited by UTP. Catalyzes the reversible phosphorylation of UMP to UDP. The chain is Uridylate kinase from Pyrobaculum calidifontis (strain DSM 21063 / JCM 11548 / VA1).